A 286-amino-acid chain; its full sequence is ATP synthase gamma chain (286 aa).

Belongs to the ATPase gamma chain family. As to quaternary structure, F-type ATPases have 2 components, CF(1) - the catalytic core - and CF(0) - the membrane proton channel. CF(1) has five subunits: alpha(3), beta(3), gamma(1), delta(1), epsilon(1). CF(0) has three main subunits: a, b and c.

It localises to the cell inner membrane. Produces ATP from ADP in the presence of a proton gradient across the membrane. The gamma chain is believed to be important in regulating ATPase activity and the flow of protons through the CF(0) complex. The sequence is that of ATP synthase gamma chain from Shewanella putrefaciens (strain CN-32 / ATCC BAA-453).